The following is a 160-amino-acid chain: UPF0178 protein BB1267 (160 aa).

The protein belongs to the UPF0178 family.

The sequence is that of UPF0178 protein BB1267 from Bordetella bronchiseptica (strain ATCC BAA-588 / NCTC 13252 / RB50) (Alcaligenes bronchisepticus).